A 359-amino-acid polypeptide reads, in one-letter code: Fructose-bisphosphate aldolase, cytoplasmic isozyme 2 (359 aa).

Substrate contacts are provided by arginine 52 and lysine 143. Glutamate 184 functions as the Proton acceptor in the catalytic mechanism. Residue lysine 226 is the Schiff-base intermediate with dihydroxyacetone-P of the active site.

The protein belongs to the class I fructose-bisphosphate aldolase family.

Its subcellular location is the cytoplasm. The enzyme catalyses beta-D-fructose 1,6-bisphosphate = D-glyceraldehyde 3-phosphate + dihydroxyacetone phosphate. The protein operates within carbohydrate degradation; glycolysis; D-glyceraldehyde 3-phosphate and glycerone phosphate from D-glucose: step 4/4. The sequence is that of Fructose-bisphosphate aldolase, cytoplasmic isozyme 2 from Pisum sativum (Garden pea).